Here is a 147-residue protein sequence, read N- to C-terminus: Hemoglobin subunit beta (147 aa).

One can recognise a Globin domain in the interval 3 to 147 (HWTAEEKQLI…VAHALARKYH (145 aa)). Residues H64 and H93 each contribute to the heme b site.

This sequence belongs to the globin family. Heterotetramer of two alpha chains and two beta chains. In terms of tissue distribution, red blood cells.

In terms of biological role, involved in oxygen transport from the lung to the various peripheral tissues. In Cairina moschata (Muscovy duck), this protein is Hemoglobin subunit beta (HBB).